The sequence spans 299 residues: UDP-N-acetylenolpyruvoylglucosamine reductase (299 aa).

In terms of domain architecture, FAD-binding PCMH-type spans 29–193 (RIGGPAEIFL…TAASLRFRKA (165 aa)). Arg-173 is an active-site residue. Catalysis depends on Ser-222, which acts as the Proton donor. Glu-292 is a catalytic residue.

This sequence belongs to the MurB family. The cofactor is FAD.

It localises to the cytoplasm. It carries out the reaction UDP-N-acetyl-alpha-D-muramate + NADP(+) = UDP-N-acetyl-3-O-(1-carboxyvinyl)-alpha-D-glucosamine + NADPH + H(+). The protein operates within cell wall biogenesis; peptidoglycan biosynthesis. Its function is as follows. Cell wall formation. This is UDP-N-acetylenolpyruvoylglucosamine reductase from Syntrophotalea carbinolica (strain DSM 2380 / NBRC 103641 / GraBd1) (Pelobacter carbinolicus).